The following is a 182-amino-acid chain: Large ribosomal subunit protein uL10 (182 aa).

It belongs to the universal ribosomal protein uL10 family. In terms of assembly, part of the ribosomal stalk of the 50S ribosomal subunit. The N-terminus interacts with L11 and the large rRNA to form the base of the stalk. The C-terminus forms an elongated spine to which L12 dimers bind in a sequential fashion forming a multimeric L10(L12)X complex.

Its function is as follows. Forms part of the ribosomal stalk, playing a central role in the interaction of the ribosome with GTP-bound translation factors. This chain is Large ribosomal subunit protein uL10, found in Herminiimonas arsenicoxydans.